Consider the following 558-residue polypeptide: NXPE family member 2 (558 aa).

The helical transmembrane segment at 17-37 threads the bilayer; that stretch reads ASARKLFLIVLIIFVFWVVFM.

This sequence belongs to the NXPE family.

The protein resides in the membrane. This chain is NXPE family member 2 (Nxpe2), found in Mus musculus (Mouse).